The chain runs to 647 residues: Neuronal PAS domain-containing protein 4-like (647 aa).

The basic motif; degenerate stretch occupies residues 16-29 (KRFRSTKGASKARR). The region spanning 16-67 (KRFRSTKGASKARRDQMNSEIRNLRALLPISPEHRLSYLHSMSITCTYIRKS) is the bHLH domain. A helix-loop-helix motif region spans residues 30-67 (DQMNSEIRNLRALLPISPEHRLSYLHSMSITCTYIRKS). PAS domains lie at 117–181 (VLQA…SPSG) and 238–274 (SADM…HPDD).

Heterodimer; efficient DNA binding requires dimerization with another bHLH protein. As to expression, specifically expressed in endothelial and hematopoietic precursor cells.

It is found in the nucleus. Its function is as follows. Transcription factor specifically expressed in endothelial and hematopoietic precursor cells that acts as a key regulator of the endothelial differentiation cascade. Acts as an early-response transcription factor that regulates the expression of early regulators of endothelial and haematopoietic differentiation, such as etv2 and tal1. The protein is Neuronal PAS domain-containing protein 4-like of Danio rerio (Zebrafish).